Here is a 147-residue protein sequence, read N- to C-terminus: Nitric oxide reductase subunit C (147 aa).

Residues 13-29 (VFYGGSLFFIAVFVGLT) traverse the membrane as a helical; Signal-anchor segment. Residues Cys59, Cys62, and His63 each coordinate heme c.

Heterodimer of cytochromes b (large subunit) and c (small subunit).

It localises to the cell membrane. Its function is as follows. Component of the anaerobic respiratory chain that transforms nitrate to dinitrogen (denitrification). This Cereibacter sphaeroides (strain ATCC 17025 / ATH 2.4.3) (Rhodobacter sphaeroides) protein is Nitric oxide reductase subunit C (norC).